The following is a 286-amino-acid chain: NAD kinase (286 aa).

D74 (proton acceptor) is an active-site residue. Residues 74 to 75 (DG), 148 to 149 (ND), D178, A186, 189 to 194 (TAYNLS), and Q244 contribute to the NAD(+) site.

Belongs to the NAD kinase family. The cofactor is a divalent metal cation.

It is found in the cytoplasm. The catalysed reaction is NAD(+) + ATP = ADP + NADP(+) + H(+). In terms of biological role, involved in the regulation of the intracellular balance of NAD and NADP, and is a key enzyme in the biosynthesis of NADP. Catalyzes specifically the phosphorylation on 2'-hydroxyl of the adenosine moiety of NAD to yield NADP. The protein is NAD kinase of Campylobacter jejuni subsp. jejuni serotype O:2 (strain ATCC 700819 / NCTC 11168).